The primary structure comprises 209 residues: Imidazole glycerol phosphate synthase subunit HisH (209 aa).

In terms of domain architecture, Glutamine amidotransferase type-1 spans 1-205 (MIAIIDYGMG…KGVVETWKSS (205 aa)). Catalysis depends on Cys-79, which acts as the Nucleophile. Catalysis depends on residues His-180 and Glu-182.

As to quaternary structure, heterodimer of HisH and HisF.

It localises to the cytoplasm. It carries out the reaction 5-[(5-phospho-1-deoxy-D-ribulos-1-ylimino)methylamino]-1-(5-phospho-beta-D-ribosyl)imidazole-4-carboxamide + L-glutamine = D-erythro-1-(imidazol-4-yl)glycerol 3-phosphate + 5-amino-1-(5-phospho-beta-D-ribosyl)imidazole-4-carboxamide + L-glutamate + H(+). The enzyme catalyses L-glutamine + H2O = L-glutamate + NH4(+). It functions in the pathway amino-acid biosynthesis; L-histidine biosynthesis; L-histidine from 5-phospho-alpha-D-ribose 1-diphosphate: step 5/9. In terms of biological role, IGPS catalyzes the conversion of PRFAR and glutamine to IGP, AICAR and glutamate. The HisH subunit catalyzes the hydrolysis of glutamine to glutamate and ammonia as part of the synthesis of IGP and AICAR. The resulting ammonia molecule is channeled to the active site of HisF. The polypeptide is Imidazole glycerol phosphate synthase subunit HisH (Bacillus anthracis (strain A0248)).